Here is a 58-residue protein sequence, read N- to C-terminus: Basic phospholipase A2 homolog PocTX (58 aa).

A disulfide bridge links C29 with C45.

In terms of tissue distribution, expressed by the venom gland.

The protein resides in the secreted. Its function is as follows. Wasp venom phospholipase A2 homolog that lacks enzymatic activity. The sequence is that of Basic phospholipase A2 homolog PocTX from Polybia occidentalis (Paper wasp).